We begin with the raw amino-acid sequence, 382 residues long: MTAPLKTFDPIIVDVALGERAYDIVIGRGVLASLGQRIAALRPGVRTAIVTDRTVAAHWLKPTEAILAEAGIPSSTIVVEEGEGSKTYAGLEKVSEALIAAKIERNDLVIALGGGVVGDLAGFAAAILRRGVNFVQVPTSLLAQVDSSVGGKTGINSPQGKNLLGAFHQPVLVIADTAVLDTLSPRQFRAGYAEVAKYGLLGDAGFFTWLEANHADIVTGGAAREHAVATSCRAKAAIVARDERETGDRALLNLGHTFGHALEAITGFSDRLFHGEGVAVGMVLAAQFSAELGMLPPDDVTRIERHLAAVGLPTHLQDIAGFAQEGIGDADRLLALMAQDKKVKRGKLTFILMEAIGRAVIAKDVDPARVRDFLQAKLHRRG.

NAD(+) contacts are provided by residues 81–86, 115–119, 139–140, K152, and K161; these read EGEGSK, GVVGD, and TS. Zn(2+)-binding residues include E194, H256, and H274.

The protein belongs to the sugar phosphate cyclases superfamily. Dehydroquinate synthase family. Requires Co(2+) as cofactor. Zn(2+) serves as cofactor. The cofactor is NAD(+).

It is found in the cytoplasm. The catalysed reaction is 7-phospho-2-dehydro-3-deoxy-D-arabino-heptonate = 3-dehydroquinate + phosphate. It participates in metabolic intermediate biosynthesis; chorismate biosynthesis; chorismate from D-erythrose 4-phosphate and phosphoenolpyruvate: step 2/7. Functionally, catalyzes the conversion of 3-deoxy-D-arabino-heptulosonate 7-phosphate (DAHP) to dehydroquinate (DHQ). The protein is 3-dehydroquinate synthase of Bradyrhizobium sp. (strain BTAi1 / ATCC BAA-1182).